A 62-amino-acid chain; its full sequence is uncharacterized protein (62 aa).

This is an uncharacterized protein from Dictyostelium discoideum (Social amoeba).